A 218-amino-acid chain; its full sequence is Peptide methionine sulfoxide reductase A2 (218 aa).

Positions 1–19 (MDSSLKTQEPQVVETSPSP) are enriched in polar residues. Positions 1-30 (MDSSLKTQEPQVVETSPSPVAQEPPQVADK) are disordered. S205 carries the post-translational modification Phosphoserine.

Belongs to the MsrA Met sulfoxide reductase family.

It localises to the cytoplasm. The protein resides in the cytosol. It catalyses the reaction L-methionyl-[protein] + [thioredoxin]-disulfide + H2O = L-methionyl-(S)-S-oxide-[protein] + [thioredoxin]-dithiol. The catalysed reaction is [thioredoxin]-disulfide + L-methionine + H2O = L-methionine (S)-S-oxide + [thioredoxin]-dithiol. With respect to regulation, activated during dark in short day conditions. Functionally, catalyzes the reduction of methionine sulfoxide (MetSO) to methionine in proteins. Plays a protective role against oxidative stress by restoring activity to proteins that have been inactivated by methionine oxidation. Prevents cellular oxidative damage in long nights. MSRA family specifically reduces the MetSO S-enantiomer. The chain is Peptide methionine sulfoxide reductase A2 (MRSA2) from Arabidopsis thaliana (Mouse-ear cress).